The chain runs to 192 residues: Probable protein adenylyltransferase y4lH (192 aa).

The region spanning 52-190 (LDFAHYRALH…LAPLAAEIRR (139 aa)) is the Fido domain. Residues 82–83 (KG) and 139–141 (GNG) each bind ATP.

It belongs to the fic family.

The catalysed reaction is L-tyrosyl-[protein] + ATP = O-(5'-adenylyl)-L-tyrosyl-[protein] + diphosphate. It carries out the reaction L-threonyl-[protein] + ATP = 3-O-(5'-adenylyl)-L-threonyl-[protein] + diphosphate. Its function is as follows. Probable adenylyltransferase that mediates the addition of adenosine 5'-monophosphate (AMP) to specific residues of target proteins. This is Probable protein adenylyltransferase y4lH from Sinorhizobium fredii (strain NBRC 101917 / NGR234).